The following is a 579-amino-acid chain: Arginine--tRNA ligase (579 aa).

The short motif at Ala123–Arg133 is the 'HIGH' region element.

This sequence belongs to the class-I aminoacyl-tRNA synthetase family.

It is found in the cytoplasm. It catalyses the reaction tRNA(Arg) + L-arginine + ATP = L-arginyl-tRNA(Arg) + AMP + diphosphate. The polypeptide is Arginine--tRNA ligase (Haloarcula marismortui (strain ATCC 43049 / DSM 3752 / JCM 8966 / VKM B-1809) (Halobacterium marismortui)).